The following is a 257-amino-acid chain: uncharacterized protein (257 aa).

Residues 6–26 (IFWLNLAAIIIISIVVSGDMF) traverse the membrane as a helical segment.

This sequence belongs to the staphylococcal tandem lipoprotein family.

It is found in the cell membrane. This is an uncharacterized protein from Staphylococcus aureus (strain NCTC 8325 / PS 47).